The primary structure comprises 169 residues: MAPKRAKRRTVEGGSSSVFSMFDQTQIQEFKEAFTVIDQNRDGIIDKEDLRDTFAAMGRLNVKNEELDAMMKEASGPINFTVFLTMFGEKLKGADPEDVITGAFKVLDPEGKGTIKKKFLEELLTTQCDRFSQEEIKNMWAAFPPDVGGNVDYKNICYVITHGDAKDQE.

Ala-2 carries the post-translational modification N,N,N-trimethylalanine. Phosphoserine occurs at positions 15 and 16. 2 positions are modified to phosphothreonine: Thr-25 and Thr-35. The EF-hand 1 domain maps to 25–60; the sequence is TQIQEFKEAFTVIDQNRDGIIDKEDLRDTFAAMGRL. Positions 38, 40, 42, and 49 each coordinate Ca(2+). Residue Ser-75 is modified to Phosphoserine. EF-hand domains follow at residues 95-130 and 131-166; these read DPEDVITGAFKVLDPEGKGTIKKKFLEELLTTQCDR and FSQEEIKNMWAAFPPDVGGNVDYKNICYVITHGDAK. Thr-101 carries the phosphothreonine modification.

In terms of assembly, myosin is a hexamer of 2 heavy chains and 4 light chains. As to expression, expressed in fetal and adult skeletal muscle.

Myosin regulatory subunit that plays an essential role to maintain muscle integrity during early development. Plays a role in muscle contraction. The polypeptide is Myosin regulatory light chain 11 (Homo sapiens (Human)).